A 576-amino-acid chain; its full sequence is Arginine--tRNA ligase (576 aa).

A 'HIGH' region motif is present at residues 123–133 (PNIGKEMHVGH).

Belongs to the class-I aminoacyl-tRNA synthetase family. In terms of assembly, monomer.

The protein localises to the cytoplasm. It catalyses the reaction tRNA(Arg) + L-arginine + ATP = L-arginyl-tRNA(Arg) + AMP + diphosphate. This chain is Arginine--tRNA ligase, found in Wigglesworthia glossinidia brevipalpis.